Here is a 379-residue protein sequence, read N- to C-terminus: Anhydro-N-acetylmuramic acid kinase (379 aa).

Position 9-16 (9-16 (GTSADGVD)) interacts with ATP.

It belongs to the anhydro-N-acetylmuramic acid kinase family.

The enzyme catalyses 1,6-anhydro-N-acetyl-beta-muramate + ATP + H2O = N-acetyl-D-muramate 6-phosphate + ADP + H(+). It participates in amino-sugar metabolism; 1,6-anhydro-N-acetylmuramate degradation. It functions in the pathway cell wall biogenesis; peptidoglycan recycling. Its function is as follows. Catalyzes the specific phosphorylation of 1,6-anhydro-N-acetylmuramic acid (anhMurNAc) with the simultaneous cleavage of the 1,6-anhydro ring, generating MurNAc-6-P. Is required for the utilization of anhMurNAc either imported from the medium or derived from its own cell wall murein, and thus plays a role in cell wall recycling. This Synechococcus sp. (strain CC9605) protein is Anhydro-N-acetylmuramic acid kinase.